An 82-amino-acid chain; its full sequence is Small ribosomal subunit protein bS16 (82 aa).

This sequence belongs to the bacterial ribosomal protein bS16 family.

This Blochmanniella floridana protein is Small ribosomal subunit protein bS16.